The sequence spans 329 residues: Bifunctional nuclease 2 (329 aa).

The BFN domain occupies 121-256 (CVHNNPQGGN…YLAYSDGMRV (136 aa)). Residues 287 to 322 (DTKEFDLVRNMMQAVDEERYDEAAEWRDKLGKFQAK) enclose the UVR domain.

This sequence belongs to the bifunctional nuclease family.

It localises to the nucleus. Its function is as follows. Bifunctional nuclease with both RNase and DNase activities. Involved in basal defense response. Participates in abscisic acid-derived callose deposition following infection by a necrotrophic pathogen. The protein is Bifunctional nuclease 2 (BBD2) of Arabidopsis thaliana (Mouse-ear cress).